The chain runs to 140 residues: Small ribosomal subunit protein uS12 (140 aa).

2 disordered regions span residues 1-20 (MPTI…VKSD) and 35-55 (QTNV…TMTP). 3-methylthioaspartic acid is present on D102. The segment at 121-140 (DGRMQGRSKYGTKRPKAAKK) is disordered. Residues 130–140 (YGTKRPKAAKK) are compositionally biased toward basic residues.

It belongs to the universal ribosomal protein uS12 family. Part of the 30S ribosomal subunit. Contacts proteins S8 and S17. May interact with IF1 in the 30S initiation complex.

Its function is as follows. With S4 and S5 plays an important role in translational accuracy. Interacts with and stabilizes bases of the 16S rRNA that are involved in tRNA selection in the A site and with the mRNA backbone. Located at the interface of the 30S and 50S subunits, it traverses the body of the 30S subunit contacting proteins on the other side and probably holding the rRNA structure together. The combined cluster of proteins S8, S12 and S17 appears to hold together the shoulder and platform of the 30S subunit. The sequence is that of Small ribosomal subunit protein uS12 from Exiguobacterium sp. (strain ATCC BAA-1283 / AT1b).